The primary structure comprises 334 residues: Holliday junction branch migration complex subunit RuvB (334 aa).

The interval 4 to 184 (EDRLISGTQK…FGIVQRLEYY (181 aa)) is large ATPase domain (RuvB-L). Residues Ile23, Arg24, Gly65, Lys68, Thr69, Thr70, 131-133 (EDY), Arg174, Tyr184, and Arg221 each bind ATP. Thr69 provides a ligand contact to Mg(2+). Residues 185-255 (DLKSLTRIVL…VAKLALDMLE (71 aa)) are small ATPAse domain (RuvB-S). Residues 258–334 (NEGFDYMDRK…YLHFGFDKPQ (77 aa)) are head domain (RuvB-H). Residues Arg313 and Arg318 each coordinate DNA.

The protein belongs to the RuvB family. In terms of assembly, homohexamer. Forms an RuvA(8)-RuvB(12)-Holliday junction (HJ) complex. HJ DNA is sandwiched between 2 RuvA tetramers; dsDNA enters through RuvA and exits via RuvB. An RuvB hexamer assembles on each DNA strand where it exits the tetramer. Each RuvB hexamer is contacted by two RuvA subunits (via domain III) on 2 adjacent RuvB subunits; this complex drives branch migration. In the full resolvosome a probable DNA-RuvA(4)-RuvB(12)-RuvC(2) complex forms which resolves the HJ.

The protein localises to the cytoplasm. It carries out the reaction ATP + H2O = ADP + phosphate + H(+). Functionally, the RuvA-RuvB-RuvC complex processes Holliday junction (HJ) DNA during genetic recombination and DNA repair, while the RuvA-RuvB complex plays an important role in the rescue of blocked DNA replication forks via replication fork reversal (RFR). RuvA specifically binds to HJ cruciform DNA, conferring on it an open structure. The RuvB hexamer acts as an ATP-dependent pump, pulling dsDNA into and through the RuvAB complex. RuvB forms 2 homohexamers on either side of HJ DNA bound by 1 or 2 RuvA tetramers; 4 subunits per hexamer contact DNA at a time. Coordinated motions by a converter formed by DNA-disengaged RuvB subunits stimulates ATP hydrolysis and nucleotide exchange. Immobilization of the converter enables RuvB to convert the ATP-contained energy into a lever motion, pulling 2 nucleotides of DNA out of the RuvA tetramer per ATP hydrolyzed, thus driving DNA branch migration. The RuvB motors rotate together with the DNA substrate, which together with the progressing nucleotide cycle form the mechanistic basis for DNA recombination by continuous HJ branch migration. Branch migration allows RuvC to scan DNA until it finds its consensus sequence, where it cleaves and resolves cruciform DNA. This is Holliday junction branch migration complex subunit RuvB from Psychromonas ingrahamii (strain DSM 17664 / CCUG 51855 / 37).